Reading from the N-terminus, the 333-residue chain is Mycothiol acetyltransferase (333 aa).

2 consecutive N-acetyltransferase domains span residues 18–170 and 176–333; these read PTLS…LPEP and VTVR…AAAD. Glu-46 contributes to the 1D-myo-inositol 2-(L-cysteinylamino)-2-deoxy-alpha-D-glucopyranoside binding site. An acetyl-CoA-binding site is contributed by 98–100; the sequence is IVV. Residues Glu-203, Lys-242, and Glu-261 each contribute to the 1D-myo-inositol 2-(L-cysteinylamino)-2-deoxy-alpha-D-glucopyranoside site. Residues 265–267 and 272–278 contribute to the acetyl-CoA site; these read VGV and GGAGLGR. A 1D-myo-inositol 2-(L-cysteinylamino)-2-deoxy-alpha-D-glucopyranoside-binding site is contributed by Tyr-299. 304–309 contacts acetyl-CoA; sequence NERAVR.

The protein belongs to the acetyltransferase family. MshD subfamily. In terms of assembly, monomer.

The enzyme catalyses 1D-myo-inositol 2-(L-cysteinylamino)-2-deoxy-alpha-D-glucopyranoside + acetyl-CoA = mycothiol + CoA + H(+). Catalyzes the transfer of acetyl from acetyl-CoA to desacetylmycothiol (Cys-GlcN-Ins) to form mycothiol. The sequence is that of Mycothiol acetyltransferase from Frankia alni (strain DSM 45986 / CECT 9034 / ACN14a).